A 341-amino-acid polypeptide reads, in one-letter code: Uroporphyrinogen decarboxylase (341 aa).

Residues 23 to 27, Asp73, Tyr148, Ser203, and His318 each bind substrate; that span reads RQAGR.

The protein belongs to the uroporphyrinogen decarboxylase family. As to quaternary structure, homodimer.

It is found in the cytoplasm. The catalysed reaction is uroporphyrinogen III + 4 H(+) = coproporphyrinogen III + 4 CO2. Its pathway is porphyrin-containing compound metabolism; protoporphyrin-IX biosynthesis; coproporphyrinogen-III from 5-aminolevulinate: step 4/4. Its function is as follows. Catalyzes the decarboxylation of four acetate groups of uroporphyrinogen-III to yield coproporphyrinogen-III. This Brucella ovis (strain ATCC 25840 / 63/290 / NCTC 10512) protein is Uroporphyrinogen decarboxylase.